Here is a 46-residue protein sequence, read N- to C-terminus: Protein PsbN (46 aa).

Residues Ile10 to Phe30 form a helical membrane-spanning segment.

It belongs to the PsbN family.

It is found in the cellular thylakoid membrane. Its function is as follows. May play a role in photosystem I and II biogenesis. The chain is Protein PsbN from Prochlorococcus marinus (strain SARG / CCMP1375 / SS120).